The sequence spans 110 residues: Hydrogenase maturation factor HypA (110 aa).

His2 contacts Ni(2+). The Zn(2+) site is built by Cys70, Cys73, Cys86, and Cys89.

This sequence belongs to the HypA/HybF family.

Its function is as follows. Involved in the maturation of [NiFe] hydrogenases. Required for nickel insertion into the metal center of the hydrogenase. The chain is Hydrogenase maturation factor HypA from Geobacter sulfurreducens (strain ATCC 51573 / DSM 12127 / PCA).